We begin with the raw amino-acid sequence, 644 residues long: Probable potassium transport system protein Kup (644 aa).

12 helical membrane passes run 10–30, 56–76, 106–126, 143–163, 175–195, 212–232, 252–272, 282–302, 343–363, 371–391, 403–423, and 425–445; these read GGAT…GDIG, ILSL…AWVI, WWIL…GVIT, PAWK…LFMV, FGPS…TWIV, FFGI…LAVT, AWYF…GALL, PFFM…SGIA, IYLP…ILWF, FAYG…VFFV, AGLF…ANLL, and FVEG…TMST.

The protein belongs to the HAK/KUP transporter (TC 2.A.72) family.

It localises to the cell inner membrane. The enzyme catalyses K(+)(in) + H(+)(in) = K(+)(out) + H(+)(out). Its function is as follows. Transport of potassium into the cell. Likely operates as a K(+):H(+) symporter. This chain is Probable potassium transport system protein Kup, found in Acidithiobacillus ferrooxidans (strain ATCC 23270 / DSM 14882 / CIP 104768 / NCIMB 8455) (Ferrobacillus ferrooxidans (strain ATCC 23270)).